Consider the following 565-residue polypeptide: Polyadenylate-binding protein 1-A (565 aa).

RRM domains are found at residues 10-88, 98-175, 188-265, and 284-362; these read SSLY…WSQR, GNVF…PFKS, TNVF…RAQK, and VNLY…LAQR. The tract at residues 435–466 is disordered; it reads YARGQPRQNGPRQNGGQPRQNGPRPDVSGAQP. Over residues 440-454 the composition is skewed to polar residues; it reads PRQNGPRQNGGQPRQ. In terms of domain architecture, PABC spans 489 to 565; that stretch reads SALNLQSIIN…REALEVLGSN (77 aa).

This sequence belongs to the polyadenylate-binding protein type-1 family.

The protein resides in the cytoplasm. Its subcellular location is the nucleus. In terms of biological role, binds the poly(A) tail of mRNA. Appears to be an important mediator of the multiple roles of the poly(A) tail in mRNA biogenesis, stability and translation. This chain is Polyadenylate-binding protein 1-A (pabpc1A), found in Dictyostelium discoideum (Social amoeba).